The sequence spans 451 residues: Tubulin alpha-2 chain (451 aa).

Gln-11 is a binding site for GTP. Lys-40 bears the N6-acetyllysine mark. Residues Glu-71, Gly-144, Thr-145, Thr-179, Asn-206, and Asn-228 each contribute to the GTP site. Glu-71 lines the Mg(2+) pocket. Glu-254 is a catalytic residue.

The protein belongs to the tubulin family. In terms of assembly, dimer of alpha and beta chains. A typical microtubule is a hollow water-filled tube with an outer diameter of 25 nm and an inner diameter of 15 nM. Alpha-beta heterodimers associate head-to-tail to form protofilaments running lengthwise along the microtubule wall with the beta-tubulin subunit facing the microtubule plus end conferring a structural polarity. Microtubules usually have 13 protofilaments but different protofilament numbers can be found in some organisms and specialized cells. Mg(2+) serves as cofactor. Post-translationally, undergoes a tyrosination/detyrosination cycle, the cyclic removal and re-addition of a C-terminal tyrosine residue by the enzymes tubulin tyrosine carboxypeptidase (TTCP) and tubulin tyrosine ligase (TTL), respectively. In terms of processing, acetylation of alpha chains at Lys-40 stabilizes microtubules and affects affinity and processivity of microtubule motors. This modification has a role in multiple cellular functions, ranging from cell motility, cell cycle progression or cell differentiation to intracellular trafficking and signaling.

It localises to the cytoplasm. Its subcellular location is the cytoskeleton. It carries out the reaction GTP + H2O = GDP + phosphate + H(+). Functionally, tubulin is the major constituent of microtubules, a cylinder consisting of laterally associated linear protofilaments composed of alpha- and beta-tubulin heterodimers. Microtubules grow by the addition of GTP-tubulin dimers to the microtubule end, where a stabilizing cap forms. Below the cap, tubulin dimers are in GDP-bound state, owing to GTPase activity of alpha-tubulin. This Zea mays (Maize) protein is Tubulin alpha-2 chain (TUBA2).